The primary structure comprises 170 residues: Large ribosomal subunit protein uL11 (170 aa).

The protein belongs to the universal ribosomal protein uL11 family. In terms of assembly, part of the ribosomal stalk of the 50S ribosomal subunit. Interacts with L10 and the large rRNA to form the base of the stalk. L10 forms an elongated spine to which L12 dimers bind in a sequential fashion forming a multimeric L10(L12)X complex.

Its function is as follows. Forms part of the ribosomal stalk which helps the ribosome interact with GTP-bound translation factors. The protein is Large ribosomal subunit protein uL11 of Sulfolobus acidocaldarius (strain ATCC 33909 / DSM 639 / JCM 8929 / NBRC 15157 / NCIMB 11770).